We begin with the raw amino-acid sequence, 455 residues long: 2-oxoisovalerate dehydrogenase subunit alpha, mitochondrial (455 aa).

Residues 1-55 (MQGSAKMAMAVAVAVARVWRPSRGLGRTGLPLLRLLGARGLARFHPHRWQQQQHF) constitute a mitochondrion transit peptide. Tyrosine 168 and arginine 169 together coordinate thiamine diphosphate. Residue serine 216 participates in K(+) binding. Serine 217 contributes to the thiamine diphosphate binding site. Residues proline 218, threonine 221, and glutamine 222 each contribute to the K(+) site. Residue glutamate 248 coordinates Mg(2+). Positions 249, 250, and 275 each coordinate thiamine diphosphate. Mg(2+) is bound by residues asparagine 277 and tyrosine 279. Histidine 346 contributes to the thiamine diphosphate binding site. Serine 347 is subject to Phosphoserine; by BCKDK. Threonine 348 is modified (phosphothreonine). A phosphoserine mark is found at serine 349 and serine 357. Lysine 366 is subject to N6-acetyllysine; alternate. Residue lysine 366 is modified to N6-succinyllysine; alternate. N6-succinyllysine is present on lysine 390.

Belongs to the BCKDHA family. As to quaternary structure, heterotetramer of 2 alpha/BCKDHA and 2 beta chains/BCKDHB that forms the branched-chain alpha-keto acid decarboxylase (E1) component of the BCKD complex. The branched-chain alpha-ketoacid dehydrogenase is a large complex composed of three major building blocks E1, E2 and E3. It is organized around E2, a 24-meric cubic core composed of DBT, to which are associated 6 to 12 copies of E1, and approximately 6 copies of the dehydrogenase E3, a DLD dimer. Interacts with PPM1K. It depends on thiamine diphosphate as a cofactor. Mg(2+) serves as cofactor. Post-translationally, phosphorylated at Ser-347 by BCKDK and dephosphorylated by protein phosphatase PPM1K. In terms of tissue distribution, expressed in kidney (at protein level).

Its subcellular location is the mitochondrion matrix. It carries out the reaction N(6)-[(R)-lipoyl]-L-lysyl-[protein] + 3-methyl-2-oxobutanoate + H(+) = N(6)-[(R)-S(8)-2-methylpropanoyldihydrolipoyl]-L-lysyl-[protein] + CO2. Together with BCKDHB forms the heterotetrameric E1 subunit of the mitochondrial branched-chain alpha-ketoacid dehydrogenase (BCKD) complex. The BCKD complex catalyzes the multi-step oxidative decarboxylation of alpha-ketoacids derived from the branched-chain amino-acids valine, leucine and isoleucine producing CO2 and acyl-CoA which is subsequently utilized to produce energy. The E1 subunit catalyzes the first step with the decarboxylation of the alpha-ketoacid forming an enzyme-product intermediate. A reductive acylation mediated by the lipoylamide cofactor of E2 extracts the acyl group from the E1 active site for the next step of the reaction. This is 2-oxoisovalerate dehydrogenase subunit alpha, mitochondrial (BCKDHA) from Bos taurus (Bovine).